Reading from the N-terminus, the 981-residue chain is Anoctamin-3 (981 aa).

Residues 1–22 (MVHHSGSIQSFKQQKGMNISKS) are compositionally biased toward polar residues. The tract at residues 1-33 (MVHHSGSIQSFKQQKGMNISKSEITKETSLKPS) is disordered. The Cytoplasmic portion of the chain corresponds to 1 to 403 (MVHHSGSIQS…LYFAWLGWYT (403 aa)). Residues 404-424 (GMLIPAAIVGLCVFFYGLFTM) traverse the membrane as a helical segment. Asparagine 425, asparagine 448, and asparagine 455 each carry an N-linked (GlcNAc...) asparagine glycan. At 425-469 (NNSQVSQEICKATEVFMCPLCDKNCSLQRLNDSCIYAKVTYLFDN) the chain is on the extracellular side. Residues 470–490 (GGTVFFAIFMAIWATVFLEFW) traverse the membrane as a helical segment. Residues 491-550 (KRRRSILTYTWDLIEWEEEEETLRPQFEAKYYKMEIVNPITGKPEPHQPSSDKVTRLLVS) lie on the Cytoplasmic side of the membrane. The helical transmembrane segment at 551–571 (VSGIFFMISLVITAVFGVVVY) threads the bilayer. Topologically, residues 572–592 (RLVVMEQFASFKWNFIKQYWQ) are extracellular. Residues 593–613 (FATSAAAVCINFIIIMLLNLA) traverse the membrane as a helical segment. Residues 614–640 (YEKIAYLLTNLEYPRTESEWENSFALK) lie on the Cytoplasmic side of the membrane. A helical transmembrane segment spans residues 641–661 (MFLFQFVNLNSSIFYIAFFLG). At 662–761 (RFVGHPGKYN…MDEYLEMVLQ (100 aa)) the chain is on the extracellular side. A helical transmembrane segment spans residues 762–782 (FGFTTIFVAAFPLAPLLALLN). Topologically, residues 783 to 810 (NIIEIRLDAYKFVTQWRRPLPARATDIG) are cytoplasmic. The helical transmembrane segment at 811 to 831 (IWLGILEGIGILAVITNAFVI) threads the bilayer. The Extracellular segment spans residues 832–914 (AITSDYIPRF…QYWHILAARL (83 aa)). N-linked (GlcNAc...) asparagine glycosylation occurs at asparagine 866. The chain crosses the membrane as a helical span at residues 915-935 (AFIIVFEHLVFGIKSFIAYLI). Residues 936–981 (PDVPKGLHDRIRREKYLVQEMMYEAELEHLQQQRRKSGQPVHHEWP) are Cytoplasmic-facing.

It belongs to the anoctamin family. As to quaternary structure, interacts with KCNT1/Slack. As to expression, highly expressed in the forebrain striatum.

It is found in the cell membrane. It catalyses the reaction a 1,2-diacyl-sn-glycero-3-phosphocholine(in) = a 1,2-diacyl-sn-glycero-3-phosphocholine(out). The enzyme catalyses a beta-D-galactosyl-(1&lt;-&gt;1')-N-acylsphing-4-enine(out) = a beta-D-galactosyl-(1&lt;-&gt;1')-N-acylsphing-4-enine(in). Its function is as follows. Has calcium-dependent phospholipid scramblase activity; scrambles phosphatidylcholine and galactosylceramide. Seems to act as potassium channel regulator and may inhibit pain signaling; can facilitate KCNT1/Slack channel activity by promoting its full single-channel conductance at very low sodium concentrations and by increasing its sodium sensitivity. Does not exhibit calcium-activated chloride channel (CaCC) activity. The sequence is that of Anoctamin-3 (ANO3) from Homo sapiens (Human).